Here is a 427-residue protein sequence, read N- to C-terminus: 3-phosphoshikimate 1-carboxyvinyltransferase (427 aa).

Lysine 20, serine 21, and arginine 25 together coordinate 3-phosphoshikimate. Lysine 20 provides a ligand contact to phosphoenolpyruvate. 2 residues coordinate phosphoenolpyruvate: glycine 92 and arginine 120. 3-phosphoshikimate is bound by residues serine 166, glutamine 168, aspartate 312, and lysine 339. Glutamine 168 is a phosphoenolpyruvate binding site. Aspartate 312 acts as the Proton acceptor in catalysis. Phosphoenolpyruvate is bound by residues arginine 343 and arginine 385.

It belongs to the EPSP synthase family. As to quaternary structure, monomer.

It localises to the cytoplasm. It catalyses the reaction 3-phosphoshikimate + phosphoenolpyruvate = 5-O-(1-carboxyvinyl)-3-phosphoshikimate + phosphate. The protein operates within metabolic intermediate biosynthesis; chorismate biosynthesis; chorismate from D-erythrose 4-phosphate and phosphoenolpyruvate: step 6/7. In terms of biological role, catalyzes the transfer of the enolpyruvyl moiety of phosphoenolpyruvate (PEP) to the 5-hydroxyl of shikimate-3-phosphate (S3P) to produce enolpyruvyl shikimate-3-phosphate and inorganic phosphate. This chain is 3-phosphoshikimate 1-carboxyvinyltransferase, found in Streptococcus pneumoniae (strain Hungary19A-6).